Here is a 511-residue protein sequence, read N- to C-terminus: ATP synthase subunit alpha, mitochondrial (511 aa).

171 to 178 (GDRQTGKT) serves as a coordination point for ATP.

The protein belongs to the ATPase alpha/beta chains family. F-type ATPases have 2 components, CF(1) - the catalytic core - and CF(0) - the membrane proton channel. CF(1) has five subunits: alpha(3), beta(3), gamma(1), delta(1), epsilon(1). CF(0) has three main subunits: a, b and c.

The protein localises to the mitochondrion. Its subcellular location is the mitochondrion inner membrane. In terms of biological role, mitochondrial membrane ATP synthase (F(1)F(0) ATP synthase or Complex V) produces ATP from ADP in the presence of a proton gradient across the membrane which is generated by electron transport complexes of the respiratory chain. F-type ATPases consist of two structural domains, F(1) - containing the extramembraneous catalytic core, and F(0) - containing the membrane proton channel, linked together by a central stalk and a peripheral stalk. During catalysis, ATP synthesis in the catalytic domain of F(1) is coupled via a rotary mechanism of the central stalk subunits to proton translocation. Subunits alpha and beta form the catalytic core in F(1). Rotation of the central stalk against the surrounding alpha(3)beta(3) subunits leads to hydrolysis of ATP in three separate catalytic sites on the beta subunits. Subunit alpha does not bear the catalytic high-affinity ATP-binding sites. The chain is ATP synthase subunit alpha, mitochondrial (ATPA) from Oenothera biennis (German evening primrose).